The chain runs to 264 residues: Ribosomal RNA small subunit methyltransferase A (264 aa).

The S-adenosyl-L-methionine site is built by His15, Leu17, Gly42, Glu63, Asp88, and Asn109.

It belongs to the class I-like SAM-binding methyltransferase superfamily. rRNA adenine N(6)-methyltransferase family. RsmA subfamily.

Its subcellular location is the cytoplasm. It carries out the reaction adenosine(1518)/adenosine(1519) in 16S rRNA + 4 S-adenosyl-L-methionine = N(6)-dimethyladenosine(1518)/N(6)-dimethyladenosine(1519) in 16S rRNA + 4 S-adenosyl-L-homocysteine + 4 H(+). Specifically dimethylates two adjacent adenosines (A1518 and A1519) in the loop of a conserved hairpin near the 3'-end of 16S rRNA in the 30S particle. May play a critical role in biogenesis of 30S subunits. This is Ribosomal RNA small subunit methyltransferase A from Nitrosococcus oceani (strain ATCC 19707 / BCRC 17464 / JCM 30415 / NCIMB 11848 / C-107).